The primary structure comprises 776 residues: Protein FAM83C (776 aa).

The segment at 1 to 340 is DUF1669; the sequence is MQGCQAGASI…LYAESQPVEG (340 aa). Disordered regions lie at residues 344-467, 494-565, 617-653, 669-694, and 716-745; these read NEDP…STSP, SRLP…SLQH, HGQL…DDRR, PFRS…VGSA, and QGAR…LFAP. Over residues 368 to 385 the composition is skewed to low complexity; the sequence is SATGSSPSSNSLSSIKHS. Residues 452–467 are compositionally biased toward polar residues; sequence PWSQSSPALNHSSTSP. A compositionally biased stretch (basic and acidic residues) spans 523–539; it reads VEEKKVSLSQSHDHLDR. Residues 554 to 563 show a composition bias toward polar residues; sequence SRVTPDSSSL.

It belongs to the FAM83 family. Directly interacts (via DUF1669) with CSNK1A1 and CSNK1A1L. May interact with RAF1. Phosphorylated by CSNK1A1.

The protein resides in the cytoplasm. In terms of biological role, may play a role in MAPK signaling. This chain is Protein FAM83C, found in Mus musculus (Mouse).